The following is a 99-amino-acid chain: Small ribosomal subunit protein uS14m (99 aa).

Belongs to the universal ribosomal protein uS14 family.

It localises to the mitochondrion. This chain is Small ribosomal subunit protein uS14m (RPS14), found in Oenothera berteroana (Bertero's evening primrose).